The following is a 347-amino-acid chain: Dihydroorotate dehydrogenase (quinone) (347 aa).

FMN contacts are provided by residues 65–69 and threonine 89; that span reads AGLDK. Position 69 (lysine 69) interacts with substrate. 114–118 lines the substrate pocket; that stretch reads NRMGF. Asparagine 146 and asparagine 179 together coordinate FMN. Asparagine 179 contributes to the substrate binding site. Serine 182 acts as the Nucleophile in catalysis. Position 184 (asparagine 184) interacts with substrate. Positions 224 and 252 each coordinate FMN. 253–254 is a substrate binding site; sequence NT. FMN contacts are provided by residues glycine 275, glycine 304, and 325–326; that span reads YT.

The protein belongs to the dihydroorotate dehydrogenase family. Type 2 subfamily. Monomer. Requires FMN as cofactor.

The protein localises to the cell membrane. The enzyme catalyses (S)-dihydroorotate + a quinone = orotate + a quinol. Its pathway is pyrimidine metabolism; UMP biosynthesis via de novo pathway; orotate from (S)-dihydroorotate (quinone route): step 1/1. Functionally, catalyzes the conversion of dihydroorotate to orotate with quinone as electron acceptor. The protein is Dihydroorotate dehydrogenase (quinone) of Herminiimonas arsenicoxydans.